The chain runs to 1648 residues: Putative 1-phosphatidylinositol-3-phosphate 5-kinase FAB1C (1648 aa).

Residues 97–106 (YDKVHPRDSP) show a composition bias toward basic and acidic residues. 4 disordered regions span residues 97–116 (YDKV…ATES), 241–276 (QEDH…NDDA), 721–746 (SEIP…ENQL), and 1083–1139 (KTGD…GTSL). The span at 1084–1130 (TGDDNAPRNPEMHDPPKIDRRMQEGSDERDEQSHTDSEANGDNKDPE) shows a compositional bias: basic and acidic residues. In terms of domain architecture, PIPK spans 1316-1639 (NLNNRESEPS…RFRKAMTTYF (324 aa)).

In terms of assembly, component of the PI(3,5)P2 regulatory complex at least composed of ATG18, SAC/FIG4, FAB1 and VAC14. Requires Mg(2+) as cofactor. Mn(2+) serves as cofactor.

The catalysed reaction is a 1,2-diacyl-sn-glycero-3-phospho-(1D-myo-inositol-3-phosphate) + ATP = a 1,2-diacyl-sn-glycero-3-phospho-(1D-myo-inositol-3,5-bisphosphate) + ADP + H(+). The PI(3,5)P2 regulatory complex regulates both the synthesis and turnover of phosphatidylinositol 3,5-bisphosphate (PtdIns(3,5)P2). Catalyzes the phosphorylation of phosphatidylinositol 3-phosphate on the fifth hydroxyl of the myo-inositol ring, to form phosphatidylinositol 3,5-bisphosphate. The protein is Putative 1-phosphatidylinositol-3-phosphate 5-kinase FAB1C (FAB1C) of Arabidopsis thaliana (Mouse-ear cress).